The chain runs to 140 residues: Nucleoside diphosphate kinase (140 aa).

ATP contacts are provided by K11, F59, R87, T93, R104, and N114. Catalysis depends on H117, which acts as the Pros-phosphohistidine intermediate.

The protein belongs to the NDK family. Homotetramer. Requires Mg(2+) as cofactor.

It is found in the cytoplasm. The catalysed reaction is a 2'-deoxyribonucleoside 5'-diphosphate + ATP = a 2'-deoxyribonucleoside 5'-triphosphate + ADP. The enzyme catalyses a ribonucleoside 5'-diphosphate + ATP = a ribonucleoside 5'-triphosphate + ADP. Major role in the synthesis of nucleoside triphosphates other than ATP. The ATP gamma phosphate is transferred to the NDP beta phosphate via a ping-pong mechanism, using a phosphorylated active-site intermediate. This is Nucleoside diphosphate kinase from Rhodospirillum rubrum (strain ATCC 11170 / ATH 1.1.1 / DSM 467 / LMG 4362 / NCIMB 8255 / S1).